Here is a 525-residue protein sequence, read N- to C-terminus: Serine/threonine-protein kinase YPK3 (525 aa).

A phosphoserine mark is found at Ser90 and Ser105. Position 107 is a phosphothreonine (Thr107). In terms of domain architecture, Protein kinase spans 128-424 (FKPVRVLGQG…KTGANNKPTK (297 aa)). Residues 134 to 142 (LGQGAYGKV) and Lys157 each bind ATP. The tract at residues 170–193 (ATDSKREDEDKNDGNNNDNDDGLS) is disordered. A compositionally biased stretch (basic and acidic residues) spans 172-182 (DSKREDEDKND). Catalysis depends on Asp277, which acts as the Proton acceptor. Ser321 is subject to Phosphoserine; by PKH1 or PKH2. Residues 445–524 (RKIDWKLLES…KASGSYLEKY (80 aa)) enclose the AGC-kinase C-terminal domain. Position 490 is a phosphothreonine; by TORC1 (Thr490). Position 513 is a phosphoserine; by TORC1 (Ser513).

This sequence belongs to the protein kinase superfamily. AGC Ser/Thr protein kinase family. S6 kinase subfamily. In terms of processing, phosphorylated by PKA in a TORC1-dependent manner. Phosphorylation at PKA consensus sites RRxS/T decreases upon rapamycin treatment.

It localises to the cytoplasm. It carries out the reaction L-seryl-[protein] + ATP = O-phospho-L-seryl-[protein] + ADP + H(+). It catalyses the reaction L-threonyl-[protein] + ATP = O-phospho-L-threonyl-[protein] + ADP + H(+). Functionally, AGC kinase which plays a role in TOR complex 1 (TORC1) signaling pathway which mediates temporal control of cell growth in response to nutrients. Required for phosphorylation of ribosomal protein S6 (RPS6A/RPS6B) at 'Ser-232' and 'Ser-233'. The chain is Serine/threonine-protein kinase YPK3 from Saccharomyces cerevisiae (strain ATCC 204508 / S288c) (Baker's yeast).